The sequence spans 401 residues: Homocysteine-responsive endoplasmic reticulum-resident ubiquitin-like domain member 2 protein (401 aa).

The region spanning 10–89 (VTLIIKAPNQ…HMVHLVCASR (80 aa)) is the Ubiquitin-like domain. The disordered stretch occupies residues 87 to 137 (ASRSPPSSPKSSTDGESHGALASSTNSNSDHSDSTTPSPSQESLSLVAGSS). Low complexity-rich tracts occupy residues 88–98 (SRSPPSSPKSS) and 109–126 (SSTNSNSDHSDSTTPSPS). Residues 299–319 (FIMVMGAMLLVYLHQAGWFPF) form a helical membrane-spanning segment.

The protein localises to the membrane. In terms of biological role, could be involved in the unfolded protein response (UPR) pathway. This is Homocysteine-responsive endoplasmic reticulum-resident ubiquitin-like domain member 2 protein (Herpud2) from Rattus norvegicus (Rat).